Reading from the N-terminus, the 222-residue chain is Pro-opiomelanocortin (222 aa).

Residues 1-18 (MCPVWLLVAVVVVGGSRG) form the signal peptide. Residues 19–90 (AVSQCWEHPS…SSSSSSSPQS (72 aa)) constitute a propeptide that is removed on maturation. 2 disordered regions span residues 56 to 98 (IPGN…SMEH) and 148 to 170 (EEEK…LQEK). The segment covering 70-93 (PSSSSSFILPSSSSSSSSPQSKRS) has biased composition (low complexity). The segment covering 148 to 162 (EEEKAQEVMAEEEEE) has biased composition (acidic residues).

The protein belongs to the POMC family. Specific enzymatic cleavages at paired basic residues yield the different active peptides.

It localises to the secreted. Functionally, stimulates the adrenal glands to release cortisol. Its function is as follows. Anorexigenic peptide. Increases the pigmentation of skin by increasing melanin production in melanocytes. In terms of biological role, increases the pigmentation of skin by increasing melanin production in melanocytes. Endogenous orexigenic opiate. Functionally, endogenous opiate. The chain is Pro-opiomelanocortin (pomc) from Thunnus obesus (Bigeye tuna).